The chain runs to 250 residues: Ubiquinone/menaquinone biosynthesis C-methyltransferase UbiE (250 aa).

S-adenosyl-L-methionine is bound by residues Thr-74, Asp-94, 122–123 (DA), and Ser-139.

This sequence belongs to the class I-like SAM-binding methyltransferase superfamily. MenG/UbiE family.

It carries out the reaction a 2-demethylmenaquinol + S-adenosyl-L-methionine = a menaquinol + S-adenosyl-L-homocysteine + H(+). The enzyme catalyses a 2-methoxy-6-(all-trans-polyprenyl)benzene-1,4-diol + S-adenosyl-L-methionine = a 5-methoxy-2-methyl-3-(all-trans-polyprenyl)benzene-1,4-diol + S-adenosyl-L-homocysteine + H(+). The protein operates within quinol/quinone metabolism; menaquinone biosynthesis; menaquinol from 1,4-dihydroxy-2-naphthoate: step 2/2. It functions in the pathway cofactor biosynthesis; ubiquinone biosynthesis. Its function is as follows. Methyltransferase required for the conversion of demethylmenaquinol (DMKH2) to menaquinol (MKH2) and the conversion of 2-polyprenyl-6-methoxy-1,4-benzoquinol (DDMQH2) to 2-polyprenyl-3-methyl-6-methoxy-1,4-benzoquinol (DMQH2). This is Ubiquinone/menaquinone biosynthesis C-methyltransferase UbiE from Paracoccus denitrificans (strain Pd 1222).